A 369-amino-acid chain; its full sequence is Uroporphyrinogen decarboxylase (369 aa).

Substrate-binding positions include 28–32 (RQAGR), Asp-78, Tyr-154, Ser-209, and His-339.

This sequence belongs to the uroporphyrinogen decarboxylase family. As to quaternary structure, homodimer.

The protein resides in the cytoplasm. It carries out the reaction uroporphyrinogen III + 4 H(+) = coproporphyrinogen III + 4 CO2. The protein operates within porphyrin-containing compound metabolism; protoporphyrin-IX biosynthesis; coproporphyrinogen-III from 5-aminolevulinate: step 4/4. In terms of biological role, catalyzes the decarboxylation of four acetate groups of uroporphyrinogen-III to yield coproporphyrinogen-III. The protein is Uroporphyrinogen decarboxylase of Polaromonas sp. (strain JS666 / ATCC BAA-500).